The chain runs to 745 residues: Photosystem I P700 chlorophyll a apoprotein A2 (745 aa).

The next 8 helical transmembrane spans lie at 49 to 72, 138 to 161, 178 to 202, 276 to 294, 338 to 361, 377 to 403, 425 to 447, and 528 to 546; these read LFAT…FHIA, LYAG…LHLQ, LNHH…HVAI, MAHH…GHMY, LHFQ…QHMY, AALY…IFLV, AIIS…LYVH, and FLVH…LILV. The [4Fe-4S] cluster site is built by cysteine 570 and cysteine 579. Helical transmembrane passes span 586–607 and 654–676; these read AFYL…YWHW and LAVW…MFLI. Residues histidine 665, methionine 673, and tyrosine 681 each coordinate chlorophyll a. Phylloquinone is bound at residue tryptophan 682. A helical transmembrane segment spans residues 718-738; the sequence is LVGLAHFTVGYVLTYAAFVIA.

It belongs to the PsaA/PsaB family. In terms of assembly, the PsaA/B heterodimer binds the P700 chlorophyll special pair and subsequent electron acceptors. PSI consists of a core antenna complex that captures photons, and an electron transfer chain that converts photonic excitation into a charge separation. The cyanobacterial PSI reaction center is composed of one copy each of PsaA,B,C,D,E,F,I,J,K,L,M and X, and forms trimeric complexes. PSI electron transfer chain: 5 chlorophyll a, 1 chlorophyll a', 2 phylloquinones and 3 4Fe-4S clusters. PSI core antenna: 90 chlorophyll a, 22 carotenoids, 3 phospholipids and 1 galactolipid. P700 is a chlorophyll a/chlorophyll a' dimer, A0 is one or more chlorophyll a, A1 is one or both phylloquinones and FX is a shared 4Fe-4S iron-sulfur center. serves as cofactor.

The protein resides in the cellular thylakoid membrane. It catalyses the reaction reduced [plastocyanin] + hnu + oxidized [2Fe-2S]-[ferredoxin] = oxidized [plastocyanin] + reduced [2Fe-2S]-[ferredoxin]. PsaA and PsaB bind P700, the primary electron donor of photosystem I (PSI), as well as the electron acceptors A0, A1 and FX. PSI is a plastocyanin/cytochrome c6-ferredoxin oxidoreductase, converting photonic excitation into a charge separation, which transfers an electron from the donor P700 chlorophyll pair to the spectroscopically characterized acceptors A0, A1, FX, FA and FB in turn. Oxidized P700 is reduced on the lumenal side of the thylakoid membrane by plastocyanin or cytochrome c6. The polypeptide is Photosystem I P700 chlorophyll a apoprotein A2 (Synechococcus sp. (strain JA-3-3Ab) (Cyanobacteria bacterium Yellowstone A-Prime)).